Here is a 793-residue protein sequence, read N- to C-terminus: Protein translocase subunit SecA 2 (793 aa).

ATP is bound by residues glutamine 77, 95–99, and aspartate 493; that span reads GEGKT.

Belongs to the SecA family. As to quaternary structure, monomer and homodimer. Part of the essential Sec protein translocation apparatus which comprises SecA, SecYEG and auxiliary proteins SecDF. Other proteins may also be involved.

It localises to the cell membrane. The protein localises to the cytoplasm. The catalysed reaction is ATP + H2O + cellular proteinSide 1 = ADP + phosphate + cellular proteinSide 2.. Part of the Sec protein translocase complex. Interacts with the SecYEG preprotein conducting channel. Has a central role in coupling the hydrolysis of ATP to the transfer of proteins into and across the cell membrane, serving as an ATP-driven molecular motor driving the stepwise translocation of polypeptide chains across the membrane. The chain is Protein translocase subunit SecA 2 from Streptococcus sanguinis (strain SK36).